The following is a 260-amino-acid chain: Cytochrome c oxidase subunit 2 (260 aa).

At 1 to 43 the chain is on the mitochondrial intermembrane side; sequence MILRLLECRFFTIALCDAAEPWQLGFQDAATPMMQGIIDLHHD. The chain crosses the membrane as a helical span at residues 44-64; it reads IFFFLILILVFVLWMLVRALW. Topologically, residues 65 to 84 are mitochondrial matrix; sequence HFNEQTNPIPQRIVHGTTIE. A helical membrane pass occupies residues 85–105; the sequence is IIWTIFPSVILLFIAIPSFAL. Over 106-260 the chain is Mitochondrial intermembrane; sequence LYSMDGVLVD…VSNQLILQTN (155 aa). Cu cation-binding residues include H189, C224, E226, C228, H232, and M235. E226 contributes to the Mg(2+) binding site.

It belongs to the cytochrome c oxidase subunit 2 family. As to quaternary structure, component of the cytochrome c oxidase (complex IV, CIV), a multisubunit enzyme composed of a catalytic core of 3 subunits and several supernumerary subunits. The complex exists as a monomer or a dimer and forms supercomplexes (SCs) in the inner mitochondrial membrane with ubiquinol-cytochrome c oxidoreductase (cytochrome b-c1 complex, complex III, CIII). Cu cation serves as cofactor.

It is found in the mitochondrion inner membrane. It carries out the reaction 4 Fe(II)-[cytochrome c] + O2 + 8 H(+)(in) = 4 Fe(III)-[cytochrome c] + 2 H2O + 4 H(+)(out). Functionally, component of the cytochrome c oxidase, the last enzyme in the mitochondrial electron transport chain which drives oxidative phosphorylation. The respiratory chain contains 3 multisubunit complexes succinate dehydrogenase (complex II, CII), ubiquinol-cytochrome c oxidoreductase (cytochrome b-c1 complex, complex III, CIII) and cytochrome c oxidase (complex IV, CIV), that cooperate to transfer electrons derived from NADH and succinate to molecular oxygen, creating an electrochemical gradient over the inner membrane that drives transmembrane transport and the ATP synthase. Cytochrome c oxidase is the component of the respiratory chain that catalyzes the reduction of oxygen to water. Electrons originating from reduced cytochrome c in the intermembrane space (IMS) are transferred via the dinuclear copper A center (CU(A)) of subunit 2 and heme A of subunit 1 to the active site in subunit 1, a binuclear center (BNC) formed by heme A3 and copper B (CU(B)). The BNC reduces molecular oxygen to 2 water molecules using 4 electrons from cytochrome c in the IMS and 4 protons from the mitochondrial matrix. The protein is Cytochrome c oxidase subunit 2 (COX2) of Zea mays (Maize).